Consider the following 488-residue polypeptide: Solute carrier family 41 member 3 (488 aa).

Composition is skewed to basic and acidic residues over residues 1–19 (MEGT…RLKE) and 27–36 (DAGRLPKASE). Residues 1-36 (MEGTEARQRRLEGCGRLKELGPLPSHDAGRLPKASE) form a disordered region. Helical transmembrane passes span 63–83 (LIIG…LSWA), 147–167 (LAVV…ASLM), 189–209 (VITA…IVIG), 220–240 (IATP…LALM), 251–271 (WYLT…WLFI), 284–304 (YGWF…LILS), 377–397 (VLLF…CLVE), 406–426 (IFIL…LYLA), and 450–470 (GLGD…DWLL).

Belongs to the SLC41A transporter family.

It is found in the mitochondrion inner membrane. It carries out the reaction Mg(2+)(in) + 2 Na(+)(out) = Mg(2+)(out) + 2 Na(+)(in). Na(+)/Mg(2+) ion exchanger that acts as a predominant Mg(2+) efflux system at the mitochondrial inner membrane. In Mus musculus (Mouse), this protein is Solute carrier family 41 member 3 (Slc41a3).